We begin with the raw amino-acid sequence, 122 residues long: Large ribosomal subunit protein uL18 (122 aa).

It belongs to the universal ribosomal protein uL18 family. As to quaternary structure, part of the 50S ribosomal subunit; part of the 5S rRNA/L5/L18/L25 subcomplex. Contacts the 5S and 23S rRNAs.

Its function is as follows. This is one of the proteins that bind and probably mediate the attachment of the 5S RNA into the large ribosomal subunit, where it forms part of the central protuberance. The sequence is that of Large ribosomal subunit protein uL18 from Lachnospira eligens (strain ATCC 27750 / DSM 3376 / VPI C15-48 / C15-B4) (Eubacterium eligens).